The primary structure comprises 100 residues: Gas vesicle protein J (100 aa).

This sequence belongs to the gas vesicle GvpA family. Interacts with GvpA.

It is found in the gas vesicle. Functionally, a minor component of the gas vesicle, might be involved in nucleating gas vesicle formation. This protein could be important for the shape determination of the gas vesicle. Gas vesicles (GV) are hollow, gas filled proteinaceous nanostructures. During planktonic growth they allow positioning of the organism at a favorable depth for light or nutrient acquisition. Its function is as follows. When a minimal gvp locus (gvpA2-gvpR-gvpN-gvpF-gvpG-gvpL-gvpS-gvpK-gvpJ-gvpT-gvpU, called pNL29) is expressed in E.coli gas vesicles are made. The protein is Gas vesicle protein J of Priestia megaterium (Bacillus megaterium).